The following is a 59-amino-acid chain: Large ribosomal subunit protein uL30 (59 aa).

Belongs to the universal ribosomal protein uL30 family. Part of the 50S ribosomal subunit.

The polypeptide is Large ribosomal subunit protein uL30 (Pectobacterium atrosepticum (strain SCRI 1043 / ATCC BAA-672) (Erwinia carotovora subsp. atroseptica)).